Consider the following 233-residue polypeptide: Methyltransferase srdJ (233 aa).

A disordered region spans residues 1–32 (MFQVQTAGTRTGTSSPDTTTSEAGLGSTPPMP). Over residues 9-21 (TRTGTSSPDTTTS) the composition is skewed to low complexity. S-adenosyl-L-methionine contacts are provided by Trp40, Trp52, and Gly81. The short motif at 140-146 (EISSQKY) is the Required for methyltransferase activity element.

It belongs to the methyltransferase superfamily.

In terms of biological role, methyltransferase; part of the gene cluster that mediates the biosynthesis of sordarial, a salicylic aldehyde structurally related to the phytotoxin pyriculol. The most interesting aspect of this pathway is formation of an aromatic product from the highly reducing polyketide synthase srdA. SrdA synthesizes a reduced polyketide chain from one molecule of acetyl-CoA and five molecules of malonyl-CoA. The polyketide chain is then reductively released as an aldehyde. The oxidoreductases srdC, srdD and srdE then oxidize one of the hydroxy groups to facilitate the intramolecular aldol condensation, followed by dehydration to yield a salicylic aldehyde. This aldehyde can undergo facile reduction by endogenous reductases to yield the alcohol 1-hydroxy-2-hydroxymethyl-3-pent-1,3-dienylbenzene. The flavin-dependent srdI counteract against the propensity of the aldehydes to be reduced under physiological conditions and is responsible for reoxidizing 1-hydroxy-2-hydroxymethyl-3-pent-1,3-dienylbenzene back to the salicylic aldehyde. This salicylic aldehyde is then selectively epoxidized by the cupin-domain-containing oxidoreductase srdB to yield the epoxide, which can be hydrolyzed stereoselectively by the hydrolase srdG to give the final product sordarial. This Neurospora crassa (strain ATCC 24698 / 74-OR23-1A / CBS 708.71 / DSM 1257 / FGSC 987) protein is Methyltransferase srdJ.